The primary structure comprises 213 residues: Large ribosomal subunit protein uL3 (213 aa).

Gln-151 bears the N5-methylglutamine mark.

This sequence belongs to the universal ribosomal protein uL3 family. Part of the 50S ribosomal subunit. Forms a cluster with proteins L14 and L19. Post-translationally, methylated by PrmB.

In terms of biological role, one of the primary rRNA binding proteins, it binds directly near the 3'-end of the 23S rRNA, where it nucleates assembly of the 50S subunit. In Rhizobium leguminosarum bv. trifolii (strain WSM2304), this protein is Large ribosomal subunit protein uL3.